The sequence spans 730 residues: Wall-associated receptor kinase-like 3 (730 aa).

The signal sequence occupies residues 1-25 (MKTKTYNFRYIVASVLTLLMNGSSA). The Extracellular segment spans residues 26 to 357 (ATPPNSNSSS…AKLAHVLRGV (332 aa)). Residues Asn32, Asn38, Asn68, Asn90, Asn119, Asn132, Asn212, Asn233, and Asn269 are each glycosylated (N-linked (GlcNAc...) asparagine). The interval 283–340 (CLCRYGYFSRMSYRSCYCGSGYRGNPYIRGGCIDIDECEVPNKCGEDTCVNMAGRYSC) is atypical EGF-like. 3 disulfides stabilise this stretch: Cys285/Cys298, Cys320/Cys331, and Cys326/Cys340. A helical transmembrane segment spans residues 358 to 378 (LIGLLGLLFFVIGIFGLYKFI). At 379–730 (RKRRRIIRSM…LMEINRIYDS (352 aa)) the chain is on the cytoplasmic side. The region spanning 428–699 (FSIDRVLGQG…REVSIKLERI (272 aa)) is the Protein kinase domain. ATP-binding positions include 434-442 (LGQGGQGTV) and Lys456. The active-site Proton acceptor is Asp553. Positions 703–730 (PKDLDVHTENEEEEEEDQLMEINRIYDS) are disordered. A compositionally biased stretch (acidic residues) spans 712–721 (NEEEEEEDQL).

The protein belongs to the protein kinase superfamily. Ser/Thr protein kinase family. As to expression, preferentially expressed in roots and flowers.

It localises to the membrane. It carries out the reaction L-seryl-[protein] + ATP = O-phospho-L-seryl-[protein] + ADP + H(+). The enzyme catalyses L-threonyl-[protein] + ATP = O-phospho-L-threonyl-[protein] + ADP + H(+). Functionally, serine/threonine-protein kinase that may function as a signaling receptor of extracellular matrix component. In Arabidopsis thaliana (Mouse-ear cress), this protein is Wall-associated receptor kinase-like 3 (WAKL3).